We begin with the raw amino-acid sequence, 535 residues long: Growth-regulating factor 2 (535 aa).

One can recognise a QLQ domain in the interval 164-199; it reads PFTLTQWAELEQQALIYKYITANVPVPSSLLISIKK. The WRC domain occupies 227-271; sequence DPEPGRCRRTDGKKWRCSRDAVPDQKYCERHINRGRHRSRKPVEV. 2 consecutive short sequence motifs (bipartite nuclear localization signal) follow at residues 232-242 and 260-267; these read RCRRTDGKKWR and RGRHRSRK. 3 disordered regions span residues 260 to 308, 417 to 437, and 514 to 535; these read RGRH…ASSN, PIAS…EKTT, and SSVS…HYTT. Positions 272-291 are enriched in polar residues; it reads QSGQNQTAAAASKAVTTPQQ. The span at 299 to 308 shows a compositional bias: low complexity; the sequence is NRSNARASSN. Positions 426–437 are enriched in polar residues; it reads THNNNNAQEKTT.

Belongs to the GRF family. As to quaternary structure, interacts with GIF1. Strongly expressed in actively growing and developing tissues, such as roots, upper stems, and shoot tips containing the shoot apical meristem (SAM) and flower buds. Detected in young leaf primordium. Also expressed in mature flowers, but weakly expressed in mature stems and leaves.

The protein resides in the nucleus. Transcription activator that plays a role in the regulation of cell expansion in leaf and cotyledons tissues. Component of a network formed by miR396, the GRFs and their interacting factors (GIFs) acting in the regulation of meristem function, at least partially through the control of cell proliferation. This chain is Growth-regulating factor 2 (GRF2), found in Arabidopsis thaliana (Mouse-ear cress).